We begin with the raw amino-acid sequence, 1173 residues long: Alpha-mannosidase 2 (1173 aa).

The interval 1–21 (MPFSSYIGNSRRSSTGGGTGG) is disordered. Topologically, residues 1-50 (MPFSSYIGNSRRSSTGGGTGGWGQSLLPTALSKSKLAINRKPRKRTLVVN) are cytoplasmic. Residues 51–71 (FIFANFFVIALTVSLLFFLLT) form a helical; Signal-anchor membrane-spanning segment. The Lumenal portion of the chain corresponds to 72–1173 (LFHFGVPGPI…AYKLELRPHK (1102 aa)). An N-linked (GlcNAc...) asparagine glycan is attached at Asn-106. The Zn(2+) site is built by His-162 and Asp-164. Residue Asn-262 is glycosylated (N-linked (GlcNAc...) asparagine). Asp-276 is a Zn(2+) binding site. The active-site Nucleophile is Asp-276. N-linked (GlcNAc...) asparagine glycosylation is present at Asn-467. A Zn(2+)-binding site is contributed by His-564. 6 N-linked (GlcNAc...) asparagine glycosylation sites follow: Asn-675, Asn-772, Asn-782, Asn-991, Asn-1098, and Asn-1108.

It belongs to the glycosyl hydrolase 38 family. In terms of assembly, homodimer; disulfide-linked. Interacts with GALT1. Zn(2+) serves as cofactor. Glycosylated.

The protein localises to the golgi apparatus membrane. The catalysed reaction is N(4)-{beta-D-GlcNAc-(1-&gt;2)-alpha-D-Man-(1-&gt;3)-[alpha-D-Man-(1-&gt;3)-[alpha-D-Man-(1-&gt;6)]-alpha-D-Man-(1-&gt;6)]-beta-D-Man-(1-&gt;4)-beta-D-GlcNAc-(1-&gt;4)-beta-D-GlcNAc}-L-asparaginyl-[protein] + 2 H2O = 2 alpha-D-mannopyranose + an N(4)-{beta-D-GlcNAc-(1-&gt;2)-alpha-D-Man-(1-&gt;3)-[alpha-D-Man-(1-&gt;6)]-beta-D-Man-(1-&gt;4)-beta-D-GlcNAc-(1-&gt;4)-beta-D-GlcNAc}-L-asparaginyl-[protein]. Its pathway is protein modification; protein glycosylation. Inhibited by 1 mM Cu(2+) and by the class II alpha-mannosidase inhibitor swainsonine. In terms of biological role, catalyzes the first committed step in the biosynthesis of complex N-glycans. It controls conversion of high mannose to complex N-glycans; the final hydrolytic step in the N-glycan maturation pathway. Converts GlcNAcMan(5)GlcNAc(2) (Man5Gn) into GlcNAcMan(3)GlcNAc(2) (MGn) by sequential removal of two alpha1,6- and alpha1,3-linked mannose residues from the alpha1,6-mannose branch of the substrate. To a lesser extent, also able to cleave beta1,2-xylosylated Man5Gn-glycopeptide (Man5GnX-GP) and pyridylaminated substrates Man5Gn-PA and Man5GnX-PA, but not active toward Man5-glycopeptide. Required for resistance to salt stress. In Arabidopsis thaliana (Mouse-ear cress), this protein is Alpha-mannosidase 2.